The sequence spans 507 residues: Protein phosphatase 1J (507 aa).

Disordered regions lie at residues 1–102 (MLNR…RLPW) and 197–220 (LCLP…PQSC). Low complexity predominate over residues 14 to 23 (SSGGTSSQRS). Phosphothreonine is present on T41. The span at 59–73 (TAETTVSFSRPTFLQ) shows a compositional bias: polar residues. Phosphoserine occurs at positions 65 and 75. The 397-residue stretch at 103–499 (STGYAEVINA…DDISVFVIPL (397 aa)) folds into the PPM-type phosphatase domain. Residues 199–212 (LPSTPGTPGAPSPS) show a composition bias toward low complexity.

Belongs to the PP2C family. In terms of assembly, interacts with UBE2I/UBC9. As to expression, specifically expressed in the testicular germ cells.

It carries out the reaction O-phospho-L-seryl-[protein] + H2O = L-seryl-[protein] + phosphate. The enzyme catalyses O-phospho-L-threonyl-[protein] + H2O = L-threonyl-[protein] + phosphate. The polypeptide is Protein phosphatase 1J (Ppm1j) (Mus musculus (Mouse)).